The primary structure comprises 504 residues: L-carnitine/gamma-butyrobetaine antiporter (504 aa).

A run of 12 helical transmembrane segments spans residues 10-30 (IEPKVFFPPLIIVGILCWLTV), 51-71 (WGWAFEWYMVVMLFGWFWLVF), 92-112 (IFMMFASCTSAAVLFWGSIEI), 143-163 (GPLPWATYSFLSVAFAYFFFV), 195-215 (FYLVALIFAMGTSLGLATPLV), 231-251 (LDAIIITCWIILNAICVACGL), 263-283 (SYLSFLMLGWVFIVSGASFIM), 316-336 (WTVFYWAWWVIYAIQMSIFLA), 347-367 (LCFGMVLGLTASTWILWTVLG), 398-418 (WAALPLSTATMWGFFILCFIA), 446-466 (LLVRIGWSVLVGIIGIVLLAL), and 475-495 (AIIAGGCPLFFVNIMVTLSFI).

This sequence belongs to the BCCT transporter (TC 2.A.15) family. CaiT subfamily. As to quaternary structure, homotrimer.

It is found in the cell inner membrane. The catalysed reaction is 4-(trimethylamino)butanoate(in) + (R)-carnitine(out) = 4-(trimethylamino)butanoate(out) + (R)-carnitine(in). It participates in amine and polyamine metabolism; carnitine metabolism. Functionally, catalyzes the exchange of L-carnitine for gamma-butyrobetaine. The protein is L-carnitine/gamma-butyrobetaine antiporter of Escherichia coli O6:K15:H31 (strain 536 / UPEC).